A 380-amino-acid polypeptide reads, in one-letter code: Flap endonuclease 1 (380 aa).

The segment at 1–104 is N-domain; it reads MGIQGLAKLI…GELAKRSERR (104 aa). Position 19 is a symmetric dimethylarginine; by PRMT5 (arginine 19). Aspartate 34 is a binding site for Mg(2+). 2 residues coordinate DNA: arginine 47 and arginine 70. Residue lysine 80 is modified to N6-acetyllysine. Aspartate 86 provides a ligand contact to Mg(2+). Arginine 100 and arginine 104 each carry symmetric dimethylarginine; by PRMT5. Residues 122-253 are I-domain; that stretch reads EVEKFTKRLV…KRAVDLIQKH (132 aa). Mg(2+) is bound by residues glutamate 158, glutamate 160, aspartate 179, and aspartate 181. Glutamate 158 contributes to the DNA binding site. Serine 187 carries the post-translational modification Phosphoserine; by CDK2. The residue at position 192 (arginine 192) is a Symmetric dimethylarginine; by PRMT5. Serine 197 is modified (phosphoserine). Residues glycine 231 and aspartate 233 each contribute to the DNA site. Aspartate 233 contributes to the Mg(2+) binding site. A phosphoserine mark is found at serine 255, serine 293, and serine 335. The disordered stretch occupies residues 327-380; the sequence is RLSKSRQGSTQGRLDDFFKVTGSLSSAKRKEPEPKGSTKKKAKTGAAGKFKRGK. Phosphothreonine is present on threonine 336. Positions 336–344 are interaction with PCNA; it reads TQGRLDDFF. Lysine 354 carries the post-translational modification N6-acetyllysine. Residues 363–380 are compositionally biased toward basic residues; the sequence is STKKKAKTGAAGKFKRGK. Threonine 364 carries the phosphothreonine modification. Lysine 375, lysine 377, and lysine 380 each carry N6-acetyllysine.

This sequence belongs to the XPG/RAD2 endonuclease family. FEN1 subfamily. In terms of assembly, interacts with PCNA. Three molecules of FEN1 bind to one PCNA trimer with each molecule binding to one PCNA monomer. PCNA stimulates the nuclease activity without altering cleavage specificity. The C-terminal domain binds EP300; can bind simultaneously to both PCNA and EP300. Interacts with DDX11; this interaction is direct and increases flap endonuclease activity of FEN1. Interacts with WDR4; regulating its endonuclease activity. Interacts with POLB. The cofactor is Mg(2+). Post-translationally, acetylated by EP300. Acetylation inhibits both endonuclease and exonuclease activity. Acetylation also reduces DNA-binding activity but does not affect interaction with PCNA or EP300. Phosphorylation upon DNA damage induces relocalization to the nuclear plasma. Phosphorylation at Ser-187 by CDK2 occurs during late S-phase and results in dissociation from PCNA. In terms of processing, methylation at Arg-192 by PRMT5 impedes Ser-187 phosphorylation and increases interaction with PCNA.

The protein localises to the nucleus. It localises to the nucleolus. It is found in the nucleoplasm. The protein resides in the mitochondrion. Its function is as follows. Structure-specific nuclease with 5'-flap endonuclease and 5'-3' exonuclease activities involved in DNA replication and repair. During DNA replication, cleaves the 5'-overhanging flap structure that is generated by displacement synthesis when DNA polymerase encounters the 5'-end of a downstream Okazaki fragment. It enters the flap from the 5'-end and then tracks to cleave the flap base, leaving a nick for ligation. Also involved in the long patch base excision repair (LP-BER) pathway, by cleaving within the apurinic/apyrimidinic (AP) site-terminated flap. Acts as a genome stabilization factor that prevents flaps from equilibrating into structures that lead to duplications and deletions. Also possesses 5'-3' exonuclease activity on nicked or gapped double-stranded DNA, and exhibits RNase H activity. Also involved in replication and repair of rDNA and in repairing mitochondrial DNA. The polypeptide is Flap endonuclease 1 (Macaca fascicularis (Crab-eating macaque)).